Reading from the N-terminus, the 112-residue chain is Low molecular weight protein antigen 6 (112 aa).

It is found in the secreted. This Mycobacterium bovis (strain ATCC BAA-935 / AF2122/97) protein is Low molecular weight protein antigen 6 (cfp6).